Consider the following 551-residue polypeptide: Arginine--tRNA ligase (551 aa).

Positions 125 to 135 (ANPTGPLHIGH) match the 'HIGH' region motif.

The protein belongs to the class-I aminoacyl-tRNA synthetase family. Monomer.

Its subcellular location is the cytoplasm. The enzyme catalyses tRNA(Arg) + L-arginine + ATP = L-arginyl-tRNA(Arg) + AMP + diphosphate. In Nitratidesulfovibrio vulgaris (strain DP4) (Desulfovibrio vulgaris), this protein is Arginine--tRNA ligase.